The chain runs to 345 residues: Myb/SANT-like DNA-binding domain-containing protein 4 (345 aa).

The Myb-like domain maps to 4–77 (LKRKRKSNFS…EVKRRYLDWR (74 aa)). Residue K9 forms a Glycyl lysine isopeptide (Lys-Gly) (interchain with G-Cter in SUMO2) linkage. The residue at position 106 (S106) is a Phosphoserine. Glycyl lysine isopeptide (Lys-Gly) (interchain with G-Cter in SUMO2) cross-links involve residues K114 and K142. Positions 141–160 (VKVEEEERDPQSPEFEIEEE) are disordered. T188 is modified (phosphothreonine). The stretch at 203 to 345 (LLVNIEKQKL…LRIQKEGHLQ (143 aa)) forms a coiled coil. Residues K237, K254, and K273 each participate in a glycyl lysine isopeptide (Lys-Gly) (interchain with G-Cter in SUMO2) cross-link.

This chain is Myb/SANT-like DNA-binding domain-containing protein 4 (MSANTD4), found in Bos taurus (Bovine).